Consider the following 1104-residue polypeptide: Protein transport protein SEC31 homolog B (1104 aa).

WD repeat units lie at residues 5–45 (KGVG…EIFK), 62–109 (PSSE…GSQP), 120–160 (VHKG…EPSH), 170–210 (ATQG…PIIN), 214–257 (SVRR…SPVR), 261–301 (GHQR…IVAE), and 304–344 (AGNN…RYGV). T526 carries the phosphothreonine modification. The tract at residues 527 to 562 (PVSTSAKDFMPSDTDFSTKGEETQEMQEEEEESSDP) is disordered. Acidic residues predominate over residues 549-560 (TQEMQEEEEESS). The WD 8 repeat unit spans residues 662–707 (TLCDALASKLMAAGNTLAAVLCYICAGNVDRTVEIWSRSLANERDG). Disordered stretches follow at residues 782 to 811 (LSAEPETNTTASGNTQPQSTMPYNQEPTQA), 851 to 874 (HQAQPAPQPSFTPAPTSNAQPSMR), 892 to 931 (QQPTMSSHSFTGPSNNAYPVPPGPGQYAPSGPSQLGQYPN), and 952 to 994 (TPGV…SNVP). Composition is skewed to polar residues over residues 786-811 (PETNTTASGNTQPQSTMPYNQEPTQA), 863-874 (PAPTSNAQPSMR), and 892-908 (QQPTMSSHSFTGPSNNA). The segment covering 959–977 (SVQPASPPTQQAAAQAAPA) has biased composition (low complexity).

The protein belongs to the WD repeat SEC31 family. As to quaternary structure, interacts with SEC13A and SEC13B.

It is found in the golgi apparatus. It localises to the endoplasmic reticulum. Required for protein transport from the endoplasmic reticulum to the Golgi apparatus. The protein is Protein transport protein SEC31 homolog B of Arabidopsis thaliana (Mouse-ear cress).